The sequence spans 164 residues: Transcriptional repressor NrdR (164 aa).

The segment at 3–34 (CPFCSAQDTKVIDSRLVADGVQIRRRRECLSC) is a zinc-finger region. Residues 49 to 139 (PRLVKTDGTR…VYRSFQDISE (91 aa)) enclose the ATP-cone domain.

This sequence belongs to the NrdR family. The cofactor is Zn(2+).

In terms of biological role, negatively regulates transcription of bacterial ribonucleotide reductase nrd genes and operons by binding to NrdR-boxes. The polypeptide is Transcriptional repressor NrdR (Alcanivorax borkumensis (strain ATCC 700651 / DSM 11573 / NCIMB 13689 / SK2)).